Here is a 458-residue protein sequence, read N- to C-terminus: Divalent metal cation transporter MntH (458 aa).

Helical transmembrane passes span 38–58, 76–96, 119–139, 151–171, 180–200, 223–243, 275–295, 315–335, 370–390, 393–413, and 437–457; these read GFWKTLAAYTGPGILVAVGYM, SLLSVILISSLIAMLLQAMAA, GGFLWVITELAIMATDIAEII, MPLIVGIIITTADVLILLLLM, AVVATLVLVILLVFAYEVILA, MLYLSLGIVGATVMPHDLFLG, LTMAFIVNSLLLILGAALFFG, IVGAIASPMLSMLFAVALLAS, LMSVTPVLIFAIYYHGNEAKI, LLTFSQVFLSIALPFAVIPLV, and FISGVLIILNLYLIAQTLGFV.

Belongs to the NRAMP family.

Its subcellular location is the cell membrane. In terms of biological role, h(+)-stimulated, divalent metal cation uptake system. In Lacticaseibacillus casei (strain BL23) (Lactobacillus casei), this protein is Divalent metal cation transporter MntH.